The chain runs to 296 residues: Vacuolar histidine transporter YPQ3 (296 aa).

Over 1–12 the chain is Vacuolar; it reads MKLIPIILNAKN. One can recognise a PQ-loop 1 domain in the interval 10–76; it reads AKNLSGMAGS…QNLLPTMIIL (67 aa). Residues 13–33 form a helical membrane-spanning segment; that stretch reads LSGMAGSISICCWIVVFVPQI. The Cytoplasmic portion of the chain corresponds to 34–44; the sequence is YENFRRQSAEG. A helical membrane pass occupies residues 45–65; it reads LSLLFIVLWLLGDIFNVMGAM. At 66–68 the chain is on the vacuolar side; that stretch reads MQN. A helical membrane pass occupies residues 69 to 89; the sequence is LLPTMIILAAYYTLADLILLI. Residues 90 to 163 are Cytoplasmic-facing; that stretch reads QCMWYDKEKK…RTIVVKEREN (74 aa). Residues 164 to 184 form a helical membrane-spanning segment; sequence FFNDFLIVSGVLIAGILSWYI. Over 185–199 the chain is Vacuolar; that stretch reads SYCSGLDNGIPKKKP. Residues 200 to 220 traverse the membrane as a helical segment; the sequence is AFEQINLPAQILGYLSAILYL. In terms of domain architecture, PQ-loop 2 spans 208 to 270; it reads AQILGYLSAI…ASWLIGSAGT (63 aa). Residues 221 to 238 are Cytoplasmic-facing; it reads GSRIPQIVLNFKRKSCEG. Residues 239–259 traverse the membrane as a helical segment; it reads VSFLFFLFACLGNTSFIISVL. The Vacuolar segment spans residues 260–262; the sequence is SAS. A helical transmembrane segment spans residues 263-283; sequence WLIGSAGTLLMDFTVFIQFFL. Residues 284-296 are Cytoplasmic-facing; it reads YAKPKYEKILIDN.

The protein belongs to the laat-1 family.

The protein resides in the vacuole membrane. Its subcellular location is the mitochondrion membrane. Its function is as follows. Amino acid transporter that moves histidine into the vacuole. May also contribute to low affinity arginine import into the vacuole. May function as an amino acid/proton antiporter. The protein is Vacuolar histidine transporter YPQ3 of Saccharomyces cerevisiae (strain ATCC 204508 / S288c) (Baker's yeast).